A 94-amino-acid polypeptide reads, in one-letter code: Integration host factor subunit beta (94 aa).

Belongs to the bacterial histone-like protein family. Heterodimer of an alpha and a beta chain.

Its function is as follows. This protein is one of the two subunits of integration host factor, a specific DNA-binding protein that functions in genetic recombination as well as in transcriptional and translational control. The polypeptide is Integration host factor subunit beta (Caulobacter sp. (strain K31)).